Here is a 219-residue protein sequence, read N- to C-terminus: Thiamine-phosphate synthase (219 aa).

4-amino-2-methyl-5-(diphosphooxymethyl)pyrimidine-binding positions include 44 to 48 (QFREK) and Asn79. Positions 80 and 99 each coordinate Mg(2+). Residue Ser117 participates in 4-amino-2-methyl-5-(diphosphooxymethyl)pyrimidine binding. 2-[(2R,5Z)-2-carboxy-4-methylthiazol-5(2H)-ylidene]ethyl phosphate is bound at residue 143 to 145 (TST). Lys146 serves as a coordination point for 4-amino-2-methyl-5-(diphosphooxymethyl)pyrimidine. 2-[(2R,5Z)-2-carboxy-4-methylthiazol-5(2H)-ylidene]ethyl phosphate is bound by residues Gly175 and 195-196 (IS).

This sequence belongs to the thiamine-phosphate synthase family. The cofactor is Mg(2+).

It catalyses the reaction 2-[(2R,5Z)-2-carboxy-4-methylthiazol-5(2H)-ylidene]ethyl phosphate + 4-amino-2-methyl-5-(diphosphooxymethyl)pyrimidine + 2 H(+) = thiamine phosphate + CO2 + diphosphate. The enzyme catalyses 2-(2-carboxy-4-methylthiazol-5-yl)ethyl phosphate + 4-amino-2-methyl-5-(diphosphooxymethyl)pyrimidine + 2 H(+) = thiamine phosphate + CO2 + diphosphate. The catalysed reaction is 4-methyl-5-(2-phosphooxyethyl)-thiazole + 4-amino-2-methyl-5-(diphosphooxymethyl)pyrimidine + H(+) = thiamine phosphate + diphosphate. It participates in cofactor biosynthesis; thiamine diphosphate biosynthesis; thiamine phosphate from 4-amino-2-methyl-5-diphosphomethylpyrimidine and 4-methyl-5-(2-phosphoethyl)-thiazole: step 1/1. Its function is as follows. Condenses 4-methyl-5-(beta-hydroxyethyl)thiazole monophosphate (THZ-P) and 2-methyl-4-amino-5-hydroxymethyl pyrimidine pyrophosphate (HMP-PP) to form thiamine monophosphate (TMP). This Bacillus thuringiensis subsp. konkukian (strain 97-27) protein is Thiamine-phosphate synthase.